The following is a 197-amino-acid chain: Rac-like GTP-binding protein 6 (197 aa).

13–20 (GDGAVGKT) is a GTP binding site. An Effector region motif is present at residues 35 to 43 (YVPTVFDNF). GTP-binding positions include 60 to 64 (DTAGQ) and 118 to 121 (TKLD). At C194 the chain carries Cysteine methyl ester. The S-geranylgeranyl cysteine moiety is linked to residue C194. Positions 195–197 (SIL) are cleaved as a propeptide — removed in mature form.

It belongs to the small GTPase superfamily. Rho family.

Its subcellular location is the cytoplasm. It is found in the membrane. Its function is as follows. Inactive GDP-bound Rho GTPases reside in the cytosol, are found in a complex with Rho GDP-dissociation inhibitors (Rho GDIs), and are released from the GDI protein in order to translocate to membranes upon activation. The chain is Rac-like GTP-binding protein 6 (RAC6) from Oryza sativa subsp. japonica (Rice).